Reading from the N-terminus, the 249-residue chain is Probable aquaporin TIP-type (249 aa).

A run of 2 helical transmembrane segments spans residues 22-42 and 56-76; these read AGLA…GSGI and AGLI…VSVG. Residues 85-87 carry the NPA 1 motif; the sequence is NPA. A run of 3 helical transmembrane segments spans residues 103 to 123, 137 to 157, and 169 to 189; these read IVYI…LVFV, VGVG…VYTV, and IGII…LVGG. Residues 197-199 carry the NPA 2 motif; it reads NPA. The helical transmembrane segment at 217–237 threads the bilayer; the sequence is YWAGPLIGGGIAGLVYEVLFI.

Belongs to the MIP/aquaporin (TC 1.A.8) family. TIP (TC 1.A.8.10) subfamily. In terms of tissue distribution, expression is highest in root tips, with slightly lower levels of hybridizing mRNA in stems, and whole roots, and much lower levels in nodules and leaves.

It is found in the membrane. Functionally, aquaporins facilitate the transport of water and small neutral solutes across cell membranes. The chain is Probable aquaporin TIP-type (MCP1) from Medicago sativa (Alfalfa).